The sequence spans 389 residues: Succinyl-diaminopimelate desuccinylase (389 aa).

Histidine 72 lines the Zn(2+) pocket. Aspartate 74 is a catalytic residue. Aspartate 105 lines the Zn(2+) pocket. Glutamate 144 (proton acceptor) is an active-site residue. Zn(2+) contacts are provided by glutamate 145, glutamate 173, and histidine 362.

This sequence belongs to the peptidase M20A family. DapE subfamily. In terms of assembly, homodimer. Zn(2+) is required as a cofactor. Requires Co(2+) as cofactor.

The catalysed reaction is N-succinyl-(2S,6S)-2,6-diaminopimelate + H2O = (2S,6S)-2,6-diaminopimelate + succinate. Its pathway is amino-acid biosynthesis; L-lysine biosynthesis via DAP pathway; LL-2,6-diaminopimelate from (S)-tetrahydrodipicolinate (succinylase route): step 3/3. Catalyzes the hydrolysis of N-succinyl-L,L-diaminopimelic acid (SDAP), forming succinate and LL-2,6-diaminopimelate (DAP), an intermediate involved in the bacterial biosynthesis of lysine and meso-diaminopimelic acid, an essential component of bacterial cell walls. The protein is Succinyl-diaminopimelate desuccinylase of Nitrobacter hamburgensis (strain DSM 10229 / NCIMB 13809 / X14).